We begin with the raw amino-acid sequence, 423 residues long: Cyclin-B2-1 (423 aa).

A disordered region spans residues 1-61 (MDRASENRRL…EKSGKEEQKP (61 aa)). Residues 49–60 (PMLEKSGKEEQK) are compositionally biased toward basic and acidic residues.

Belongs to the cyclin family. Cyclin AB subfamily. Interacts with CDKB2-1. As to expression, expressed in the intercalary meristem and the elongation zone of internodes. Expressed in adventitious roots at all nodes under submergence conditions.

Functionally, involved in the control of the cell cycle at the G2/M (mitosis) transition. May activate CDKB2-1 kinase. The protein is Cyclin-B2-1 (CYCB2-1) of Oryza sativa subsp. indica (Rice).